The sequence spans 54 residues: Ovomucoid (54 aa).

In terms of domain architecture, Kazal-like spans 4–54 (VDCSEYPKPACTLEHRPLCGSDNKTYGNKCNFCNAVVESNGTLTLSHFGKC). Cystine bridges form between C6–C36, C14–C33, and C22–C54. N43 carries N-linked (GlcNAc...) asparagine glycosylation.

The protein resides in the secreted. The polypeptide is Ovomucoid (Pavo muticus (Green peafowl)).